The chain runs to 236 residues: MFDSFLNELHSDITKRGGSPLPLPEGLEECRSSKSSSVIQSWLWDVPGFRRWRVTRLDAGDSLQVFNSVAYPDYNYDHPLMGVDLLWFGARQKLVAVLDFQPLVQDKDYLDRYFSGLKELNQRFPDLNGEETMRSFDPNQYFSSWLLFCRGGAEQADLSLPKAFSAFLKAYWDLHDNAKSIPSTIPPEEVKNLQDKYDIYSAERDPAHGLFTSHFGKDWSNRFLHEFLFPASSSHK.

This sequence belongs to the HY2 family.

It catalyses the reaction 15,16-dihydrobiliverdin + oxidized 2[4Fe-4S]-[ferredoxin] = biliverdin IXalpha + reduced 2[4Fe-4S]-[ferredoxin] + 2 H(+). In terms of biological role, catalyzes the two-electron reduction of biliverdin IX-alpha at the C15 methine bridge. This chain is 15,16-dihydrobiliverdin:ferredoxin oxidoreductase (pebA), found in Synechococcus sp. (strain WH8020).